A 237-amino-acid polypeptide reads, in one-letter code: Large ribosomal subunit protein uL22m (237 aa).

It belongs to the universal ribosomal protein uL22 family.

The protein localises to the mitochondrion. This chain is Large ribosomal subunit protein uL22m (mrpl22), found in Dictyostelium discoideum (Social amoeba).